Consider the following 589-residue polypeptide: Proton pump-interactor 2 (589 aa).

The stretch at 205–245 (EDSLAEKEASINRVKSMAVELNEVKKELDAITWKINHLSDK) forms a coiled coil. Basic and acidic residues-rich tracts occupy residues 370-383 (KGGE…REDS), 395-408 (TDKR…KAMD), 426-450 (VYEK…REEQ), and 504-534 (ESDH…KERS). Disordered stretches follow at residues 370 to 450 (KGGE…REEQ) and 485 to 534 (KECE…KERS). Residues 431–500 (KKEEEEVDEE…AKKKAAANSS (70 aa)) adopt a coiled-coil conformation. A helical transmembrane segment spans residues 568-588 (WVWGLSSAALAVALFLVVLLL).

Belongs to the plant Proton pump-interactor protein family. As to expression, expressed in seedlings and flowers.

The protein resides in the cell membrane. It is found in the endoplasmic reticulum membrane. In terms of biological role, may regulate plasma membrane ATPase activity. This is Proton pump-interactor 2 (PPI2) from Arabidopsis thaliana (Mouse-ear cress).